The following is a 69-amino-acid chain: Chondroitin proteoglycan 9 (69 aa).

The first 19 residues, 1-19 (MHLWQLVLLVILFFGAAFG), serve as a signal peptide directing secretion. O-linked (Xyl...) (chondroitin sulfate) serine glycosylation is found at Ser-25 and Ser-27.

In Caenorhabditis elegans, this protein is Chondroitin proteoglycan 9.